The chain runs to 369 residues: Transcription factor GTE6 (369 aa).

The Bromo domain maps to 89 to 198 (KRMQDLMRQF…EKFEEKWAHF (110 aa)). A coiled-coil region spans residues 201–263 (KVQEEEKIRE…VERCRKITIE (63 aa)). The NET domain occupies 250–331 (MRKVVERCRK…DALDNAMKKK (82 aa)). Residues 329 to 348 (KKKKEEETKTRELSGAQKKE) show a composition bias toward basic and acidic residues. Residues 329 to 369 (KKKKEEETKTRELSGAQKKEVSKKRNATTKLAERKTKRSRI) are disordered. Positions 351–368 (KKRNATTKLAERKTKRSR) match the Bipartite nuclear localization signal motif.

In terms of tissue distribution, abundantly expressed in flowers. Weakly expressed in roots, leaves and siliques; and undetectable in 5-day-old seedlings. In the basal rosette leaves of 21-day-old plants, it is more abundant in leaves 6 and 7, which possess narrow elliptical laminae, than in leaves 1-4, which have round laminae, suggesting a possible correlation between its expression and the formation of elliptical leaf laminae in mature leaves.

The protein resides in the nucleus. In terms of biological role, regulates differences in leaf patterning between juvenile and mature leaves by controlling differences in the development of primordia produced during juvenile and mature phases. Acts by activating transcription of the myb-domain protein AS1, a gene involved in leaf-axis specification. Associates with the promoter and the start of the transcribed region of AS1 and up-regulates expression of AS1 through acetylation of histones H3 and H4. The chain is Transcription factor GTE6 (GTE6) from Arabidopsis thaliana (Mouse-ear cress).